Reading from the N-terminus, the 388-residue chain is Large ribosomal subunit protein uL3B (388 aa).

Residues 1-10 (MSHCKFEQPR) are compositionally biased toward basic and acidic residues. Residues 1 to 34 (MSHCKFEQPRHGSLGFLPRKRASRQRGKVKAFPK) are disordered. Positions 18–31 (PRKRASRQRGKVKA) are enriched in basic residues.

Belongs to the universal ribosomal protein uL3 family. In terms of assembly, component of the large ribosomal subunit (LSU). Mature yeast ribosomes consist of a small (40S) and a large (60S) subunit. The 40S small subunit contains 1 molecule of ribosomal RNA (18S rRNA) and at least 33 different proteins. The large 60S subunit contains 3 rRNA molecules (25S, 5.8S and 5S rRNA) and at least 46 different proteins. uL3 forms together with ES39L one of the contact sites for the signal recognition particle that targets ribosomes to the endoplasmic reticulum membrane.

Its subcellular location is the cytoplasm. Functionally, component of the ribosome, a large ribonucleoprotein complex responsible for the synthesis of proteins in the cell. The small ribosomal subunit (SSU) binds messenger RNAs (mRNAs) and translates the encoded message by selecting cognate aminoacyl-transfer RNA (tRNA) molecules. The large subunit (LSU) contains the ribosomal catalytic site termed the peptidyl transferase center (PTC), which catalyzes the formation of peptide bonds, thereby polymerizing the amino acids delivered by tRNAs into a polypeptide chain. The nascent polypeptides leave the ribosome through a tunnel in the LSU and interact with protein factors that function in enzymatic processing, targeting, and the membrane insertion of nascent chains at the exit of the ribosomal tunnel. uL3 plays a role in coordinating processes of accommodating the aminoacyl-tRNA in the PTC. The protein is Large ribosomal subunit protein uL3B (rpl302) of Schizosaccharomyces pombe (strain 972 / ATCC 24843) (Fission yeast).